The primary structure comprises 901 residues: Aconitate hydratase A (901 aa).

Cys443, Cys509, and Cys512 together coordinate [4Fe-4S] cluster.

It belongs to the aconitase/IPM isomerase family. As to quaternary structure, monomer. It depends on [4Fe-4S] cluster as a cofactor.

The enzyme catalyses citrate = D-threo-isocitrate. The catalysed reaction is (2S,3R)-3-hydroxybutane-1,2,3-tricarboxylate = 2-methyl-cis-aconitate + H2O. It participates in carbohydrate metabolism; tricarboxylic acid cycle; isocitrate from oxaloacetate: step 2/2. It functions in the pathway organic acid metabolism; propanoate degradation. Involved in the catabolism of short chain fatty acids (SCFA) via the tricarboxylic acid (TCA)(acetyl degradation route) and probably the 2-methylcitrate cycle I (propionate degradation route). Catalyzes the reversible isomerization of citrate to isocitrate via cis-aconitate. Could catalyze the hydration of 2-methyl-cis-aconitate to yield (2R,3S)-2-methylisocitrate. The apo form of AcnA functions as a RNA-binding regulatory protein. The chain is Aconitate hydratase A (acnA) from Staphylococcus epidermidis (strain ATCC 35984 / DSM 28319 / BCRC 17069 / CCUG 31568 / BM 3577 / RP62A).